Consider the following 447-residue polypeptide: Tubulin beta-1 chain (447 aa).

Residues Gln-11, Glu-69, Ser-138, Gly-142, Thr-143, Gly-144, Asn-204, and Asn-226 each coordinate GTP. Glu-69 is a Mg(2+) binding site. The interval 424 to 447 is disordered; sequence QYQDATAEEEGEGDEEEAEGEAAA. The segment covering 429–447 has biased composition (acidic residues); it reads TAEEEGEGDEEEAEGEAAA.

The protein belongs to the tubulin family. In terms of assembly, dimer of alpha and beta chains. A typical microtubule is a hollow water-filled tube with an outer diameter of 25 nm and an inner diameter of 15 nM. Alpha-beta heterodimers associate head-to-tail to form protofilaments running lengthwise along the microtubule wall with the beta-tubulin subunit facing the microtubule plus end conferring a structural polarity. Microtubules usually have 13 protofilaments but different protofilament numbers can be found in some organisms and specialized cells. Mg(2+) serves as cofactor.

The protein localises to the cytoplasm. It is found in the cytoskeleton. Functionally, tubulin is the major constituent of microtubules, a cylinder consisting of laterally associated linear protofilaments composed of alpha- and beta-tubulin heterodimers. Microtubules grow by the addition of GTP-tubulin dimers to the microtubule end, where a stabilizing cap forms. Below the cap, tubulin dimers are in GDP-bound state, owing to GTPase activity of alpha-tubulin. The protein is Tubulin beta-1 chain (TUBB1) of Cyanophora paradoxa.